We begin with the raw amino-acid sequence, 419 residues long: Multiple organellar RNA editing factor 1, mitochondrial (419 aa).

Residues 1–60 (MAMISHRLRRALLTATSYVNRSISSSITPASDFPSVSAAVLKRSVIGRSTEVATRAPARL) constitute a mitochondrion transit peptide. Positions 174 to 401 (KEYGGDKYEN…AGQPGSDQVR (228 aa)) are disordered. Residues 237–252 (GPQQGYATPGQGQGTQ) are compositionally biased toward low complexity. The span at 310 to 327 (GQGGSGNYSQGPQGGYNQ) shows a compositional bias: gly residues. The span at 342-356 (GPASGAGNLGPAPGA) shows a compositional bias: low complexity. Gly residues predominate over residues 357–367 (GNPGYGQGYSG). Polar residues predominate over residues 371-401 (EQNQTFPQADQRNRDWNNNNPAGQPGSDQVR).

This sequence belongs to the MORF family. Homodimer and heterodimer with MORF3. Heterodimers with MORF8/RIP1, MORF4/RIP4 and MORF6/RIP6. Interacts with PCMP-E90/MEF13. Interacts with PCMP-H13/MEF35.

It is found in the mitochondrion. Involved in organellar RNA editing. Required for the processing of numerous RNA editing sites in mitochondria. Binds to the mitochondrial MEF19 and MEF21 factors, two pentatricopeptide repeat-containing proteins involved in RNA editing. In Arabidopsis thaliana (Mouse-ear cress), this protein is Multiple organellar RNA editing factor 1, mitochondrial.